The chain runs to 300 residues: Ribosomal protein L11 methyltransferase (300 aa).

S-adenosyl-L-methionine is bound by residues Thr152, Gly173, Asp195, and Asn234.

It belongs to the methyltransferase superfamily. PrmA family.

Its subcellular location is the cytoplasm. The enzyme catalyses L-lysyl-[protein] + 3 S-adenosyl-L-methionine = N(6),N(6),N(6)-trimethyl-L-lysyl-[protein] + 3 S-adenosyl-L-homocysteine + 3 H(+). In terms of biological role, methylates ribosomal protein L11. This chain is Ribosomal protein L11 methyltransferase, found in Burkholderia orbicola (strain MC0-3).